A 362-amino-acid chain; its full sequence is MAFDLKTEDGLITYLTKHLSLDVDTSGVKRLSGGFVNVTWRIKLNAPYQGHTSIILKHAQPHMSTDEDFKIGVERSVYEYQAIKLMMANREVLGGVDGIVSVPEGLNYDLENNALIMQDVGKMKTLLDYVTAKPPLATDIARLVGTEIGGFVARLHNIGRERRDDPEFKFFSGNIVGRTTSDQLYQTIIPNAAKYGVDDPLLPTVVKDLVDDVMHSEETLVMADLWSGNILLQLEEGNPSKLQKIYILDWELCKYGPASLDLGYFLGDCYLISRFQDEQVGTTMRQAYLQSYARTSKHSINYAKVTAGIAAHIVMWTDFMQWGSEEERINFVKKGVAAFHDARGNNDNGEITSTLLKESSTA.

Residues N37, K57, and Q118–V120 each bind ATP. D224 is an active-site residue. D249–E251 provides a ligand contact to ATP.

Belongs to the methylthioribose kinase family. As to quaternary structure, monomer. Mg(2+) serves as cofactor.

The enzyme catalyses 4-hydroxytryptamine + ATP = norbaeocystin + ADP + H(+). The catalysed reaction is psilocin + ATP = psilocybin + ADP + H(+). It carries out the reaction 4-hydroxy-N,N,N-trimethyltryptamine + ATP = aeruginascin + ADP + H(+). The protein operates within secondary metabolite biosynthesis. Functionally, 4-hydroxytryptamine kinase; part of the gene cluster that mediates the biosynthesis of psilocybin, a psychotropic tryptamine-derived natural product. The first step in the pathway is the decarboxylation of L-tryptophan to tryptamine by the decarboxylase psiD. 4-hydroxy-L-tryptophan is accepted as substrate by psiD as well. The cytochrome P450 monooxygenase psiH then converts tryptamine to 4-hydroxytryptamine. The kinase psiK catalyzes the 4-O-phosphorylation step by converting 4-hydroxytryptamine into norbaeocystin. The methyltransferase psiM then catalyzes iterative methyl transfer to the amino group of norbaeocystin to yield psilocybin via a monomethylated intermediate, baeocystin. 4-hydroxy-6-methyl-l-tryptophancan also be converted the decarboxylase PsiD, kinase PsiK, and methyltransferase PsiM into respectively 6-methyl-norbaeocystin, 6-methylbaeocystin, and 6-methylpsilocybin. PsiK kinase can also turn psilocin into psilocybin. This activity may represent a protective mechanism to rephosphorylate the unstable psilocin to the stable psilocybin in case of intracellular ester cleavage. Moreover, psiK is able to O-phosphorylate the quaternary amine 4-hydroxy-N,N,N-trimethyltryptamine (4-OH-TMT) to yield aeruginascin, another bioactive compound found in Psilocybe species. In Psilocybe cubensis (Psychedelic mushroom), this protein is 4-hydroxytryptamine kinase.